Consider the following 562-residue polypeptide: Probable malate:quinone oxidoreductase (562 aa).

Belongs to the MQO family. The cofactor is FAD.

It catalyses the reaction (S)-malate + a quinone = a quinol + oxaloacetate. The protein operates within carbohydrate metabolism; tricarboxylic acid cycle; oxaloacetate from (S)-malate (quinone route): step 1/1. The chain is Probable malate:quinone oxidoreductase from Stenotrophomonas maltophilia (strain K279a).